A 360-amino-acid chain; its full sequence is Peptide chain release factor 1 (360 aa).

At Gln235 the chain carries N5-methylglutamine. Basic and acidic residues predominate over residues 285 to 308 (KRQEAEASERRNLLGSGDRSDRNR). Residues 285-313 (KRQEAEASERRNLLGSGDRSDRNRTYNFP) are disordered.

The protein belongs to the prokaryotic/mitochondrial release factor family. In terms of processing, methylated by PrmC. Methylation increases the termination efficiency of RF1.

It is found in the cytoplasm. Its function is as follows. Peptide chain release factor 1 directs the termination of translation in response to the peptide chain termination codons UAG and UAA. The chain is Peptide chain release factor 1 from Photorhabdus laumondii subsp. laumondii (strain DSM 15139 / CIP 105565 / TT01) (Photorhabdus luminescens subsp. laumondii).